The chain runs to 210 residues: HTH-type transcriptional repressor FabR (210 aa).

The region spanning 10 to 70 is the HTH tetR-type domain; sequence KTRRSLVEAA…TMVDESGLML (61 aa). The segment at residues 33–52 is a DNA-binding region (H-T-H motif); that stretch reads SLREVAREAGIAPTSFYRHF.

Homodimer.

The protein localises to the cytoplasm. In terms of biological role, represses the transcription of fabB, involved in unsaturated fatty acid (UFA) biosynthesis. By controlling UFA production, FabR directly influences the physical properties of the membrane bilayer. The polypeptide is HTH-type transcriptional repressor FabR (Salmonella paratyphi A (strain ATCC 9150 / SARB42)).